The sequence spans 869 residues: Rho GTPase-activating protein 27 (869 aa).

One can recognise an SH3 domain in the interval 6–69 (EGDVYVLVEH…PAQYVRELPA (64 aa)). At alanine 28 the chain carries Phosphotyrosine. The interval 104-134 (GADGSSAEPRGRASSLCGPARQRTGGQRNSL) is disordered. Phosphoserine is present on residues serine 155, serine 215, and serine 249. 2 disordered regions span residues 208 to 300 (RCPP…SGES) and 331 to 401 (ETEE…GWSC). Positions 209–220 (CPPRAESPKQVD) are enriched in basic and acidic residues. Positions 235–250 (RATSPRSAAAPPRLSP) are enriched in low complexity. In terms of domain architecture, WW 1 spans 246–280 (PRLSPVWETHTDTGTGRPYYYNPDTGVTTWESPFE). Positions 283 to 294 (EGTTSPATSRAS) are enriched in polar residues. The 35-residue stretch at 299–333 (ESLETEWGQYWDEESRRVFFYNPLTGETAWEDETE) folds into the WW 2 domain. Residues 345-356 (MQPSLSPRSPGQ) are compositionally biased toward polar residues. Serine 350 is modified (phosphoserine). The WW 3 domain occupies 414 to 447 (QFTQEQWVRLEDQHGKPYFYNPEDSSVQWELPQV). Disordered stretches follow at residues 449 to 477 (IPAP…KIKT) and 623 to 642 (EEDV…GLES). Residues serine 459 and serine 462 each carry the phosphoserine modification. Phosphothreonine is present on threonine 464. Position 469 is a phosphoserine (serine 469). A PH domain is found at 477–593 (TLDKAGVLHR…WHKAIAEGIS (117 aa)). Phosphoserine occurs at positions 632 and 636. Residues 677-866 (CALAQLCERE…LILHQCADIF (190 aa)) form the Rho-GAP domain.

Interacts with SH3KBP1/CIN85. Widely expressed. Highly expressed in kidney, lung, small intestine and thymus.

The protein localises to the cytoplasm. Its subcellular location is the membrane. Its function is as follows. Rho GTPase-activating protein which may be involved in clathrin-mediated endocytosis. GTPase activators for the Rho-type GTPases act by converting them to an inactive GDP-bound state. Has activity toward CDC42 and RAC1. This Mus musculus (Mouse) protein is Rho GTPase-activating protein 27 (Arhgap27).